A 114-amino-acid polypeptide reads, in one-letter code: Nucleoid-associated protein Clos_2855 (114 aa).

This sequence belongs to the YbaB/EbfC family. As to quaternary structure, homodimer.

The protein localises to the cytoplasm. Its subcellular location is the nucleoid. In terms of biological role, binds to DNA and alters its conformation. May be involved in regulation of gene expression, nucleoid organization and DNA protection. The chain is Nucleoid-associated protein Clos_2855 from Alkaliphilus oremlandii (strain OhILAs) (Clostridium oremlandii (strain OhILAs)).